The primary structure comprises 738 residues: Polyphosphate kinase (738 aa).

The disordered stretch occupies residues 1–48 (MIGNDRWVTEIETGPVTEARPDTNAREPGDRTPAAPPAATPAATTDQL). Residues 19-30 (ARPDTNAREPGD) show a composition bias toward basic and acidic residues. ATP is bound at residue asparagine 91. The Mg(2+) site is built by arginine 427 and arginine 457. Residue histidine 487 is the Phosphohistidine intermediate of the active site. ATP is bound by residues tyrosine 520, arginine 620, and histidine 648.

The protein belongs to the polyphosphate kinase 1 (PPK1) family. Mg(2+) serves as cofactor. Post-translationally, an intermediate of this reaction is the autophosphorylated ppk in which a phosphate is covalently linked to a histidine residue through a N-P bond.

The enzyme catalyses [phosphate](n) + ATP = [phosphate](n+1) + ADP. Catalyzes the reversible transfer of the terminal phosphate of ATP to form a long-chain polyphosphate (polyP). This is Polyphosphate kinase from Mycobacterium marinum (strain ATCC BAA-535 / M).